The following is a 204-amino-acid chain: Arginine exporter protein ArgO (204 aa).

The next 6 helical transmembrane spans lie at 1 to 21 (MFAV…PLGP), 37 to 57 (LMVA…GIFG), 67 to 87 (LLLG…GWGA), 111 to 131 (IIAT…DTFV), 147 to 167 (WFAL…ALLA), and 179 to 199 (VQRV…LQLA).

It belongs to the LysE/ArgO transporter (TC 2.A.75) family.

The protein localises to the cell inner membrane. The enzyme catalyses L-arginine(in) = L-arginine(out). Its function is as follows. Involved in the export of arginine. Important to control the intracellular level of arginine and the correct balance between arginine and lysine. The chain is Arginine exporter protein ArgO from Pectobacterium carotovorum subsp. carotovorum (strain PC1).